Here is a 417-residue protein sequence, read N- to C-terminus: Serine hydroxymethyltransferase (417 aa).

(6S)-5,6,7,8-tetrahydrofolate is bound by residues Leu-121 and 125–127 (GHL). Lys-229 carries the post-translational modification N6-(pyridoxal phosphate)lysine. 355–357 (SPF) serves as a coordination point for (6S)-5,6,7,8-tetrahydrofolate.

Belongs to the SHMT family. As to quaternary structure, homodimer. Pyridoxal 5'-phosphate is required as a cofactor.

It localises to the cytoplasm. It catalyses the reaction (6R)-5,10-methylene-5,6,7,8-tetrahydrofolate + glycine + H2O = (6S)-5,6,7,8-tetrahydrofolate + L-serine. It participates in one-carbon metabolism; tetrahydrofolate interconversion. The protein operates within amino-acid biosynthesis; glycine biosynthesis; glycine from L-serine: step 1/1. Functionally, catalyzes the reversible interconversion of serine and glycine with tetrahydrofolate (THF) serving as the one-carbon carrier. This reaction serves as the major source of one-carbon groups required for the biosynthesis of purines, thymidylate, methionine, and other important biomolecules. Also exhibits THF-independent aldolase activity toward beta-hydroxyamino acids, producing glycine and aldehydes, via a retro-aldol mechanism. This is Serine hydroxymethyltransferase from Citrobacter koseri (strain ATCC BAA-895 / CDC 4225-83 / SGSC4696).